The following is a 2542-amino-acid chain: Ankyrin repeat and KH domain-containing protein 1 (2542 aa).

Position 1 is an N-acetylmethionine (Met-1). The segment covering 1-10 (MLTDSGGGGT) has biased composition (gly residues). Disordered stretches follow at residues 1 to 44 (MLTD…IRTV) and 50 to 69 (AGPA…SGTG). The segment covering 20-29 (APRSAPAGAS) has biased composition (low complexity). A compositionally biased stretch (gly residues) spans 57-69 (GSSGGGGSGSGTG). Phosphoserine is present on residues Ser-101 and Ser-105. ANK repeat units lie at residues 204–233 (VDTR…SVNE), 237–266 (EGES…NVED), 271–300 (GDIT…DVNS), 304–333 (TGNT…NIED), 337–366 (NGHT…GINT), 371–400 (FKES…DQEH), 404–433 (EMHT…QVNM), 437–466 (SFES…NLEE), 470–499 (EGYT…NINA), 504–533 (TQET…DIEL), 534–563 (GCST…NVHA), 567–596 (TGDT…DLEH), 600–629 (GGRT…NVNR), 634–663 (NDHT…DPTH), and 667–696 (DGST…NVLS). The stretch at 775 to 852 (LECIVEETEG…RQLQMKTQQQ (78 aa)) forms a coiled coil. The residue at position 803 (Ser-803) is a Phosphoserine. 10 ANK repeats span residues 1054–1083 (NHDT…KIEH), 1087–1116 (KGFT…DIEA), 1121–1150 (TKDT…NKEH), 1154–1183 (SDYT…EINS), 1189–1218 (LGIS…DINA), 1223–1252 (NRNT…NVEH), 1256–1285 (TGLT…DVNA), 1291–1320 (SRDT…HIDV), 1324–1353 (KGNT…DVDA), and 1357–1386 (RKIT…QFPS). The stretch at 1415-1485 (KAKDQQAAEA…ENKPKENSEL (71 aa)) forms a coiled coil. 3 disordered regions span residues 1441-1517 (REES…TIGI), 1534-1614 (NVVT…SQEL), and 1632-1664 (SQEE…YKTV). Over residues 1453–1463 (REKRKEKRKKK) the composition is skewed to basic residues. Over residues 1464–1483 (KEEQKRKQEEDEENKPKENS) the composition is skewed to basic and acidic residues. The segment covering 1484-1502 (ELPEDEDEEENDEDVEQEV) has biased composition (acidic residues). Residues 1503–1517 (PIEPPSATTTTTIGI) show a composition bias toward low complexity. Phosphoserine is present on Ser-1540. A Phosphothreonine modification is found at Thr-1553. The segment covering 1590–1603 (NSDSDNLDSTDCNS) has biased composition (low complexity). The segment covering 1604 to 1614 (ESSSGGKSQEL) has biased composition (polar residues). Ser-1632 is modified (phosphoserine). Polar residues predominate over residues 1638–1664 (STATSKTQTRLEGEVTPNSLSTSYKTV). The residue at position 1653 (Thr-1653) is a Phosphothreonine. Residues 1695 to 1759 (RRSKKLSVPA…ESTRYAVQLI (65 aa)) form the KH domain. 3 disordered regions span residues 1886–1923 (NTWG…VLPS), 1987–2106 (PSVS…APLT), and 2260–2367 (NMHP…IPPP). Over residues 1898–1922 (PGNTNSSPKHNNTSRLPNQNGTVLP) the composition is skewed to polar residues. The span at 1987–1996 (PSVSSAPITS) shows a compositional bias: low complexity. The span at 1997–2019 (GQAPTTFLPASTSQAQLSSQKME) shows a compositional bias: polar residues. The span at 2042-2077 (CTPSSTANSCSSSASNTPGAPETHPSSSPTPTSSNT) shows a compositional bias: low complexity. Over residues 2078–2106 (QEEAQPSSVSDLSPMSMPFASNSEPAPLT) the composition is skewed to polar residues. 2 stretches are compositionally biased toward low complexity: residues 2285-2308 (LPSI…FSGI) and 2337-2349 (TSAS…APPT).

It belongs to the mask family. As to quaternary structure, interacts with PTPN11. Isoform 2 interacts with HIV-1 VPR. Interacts with NOD2. In terms of tissue distribution, ubiquitous with high expression in cervix, spleen and brain. Expressed in hematopoietic cells with increased expression in leukemia cells. Isoform 2 is highly expressed in spleen with almost no expression in muscle and brain.

Its subcellular location is the cytoplasm. May play a role as a scaffolding protein that may be associated with the abnormal phenotype of leukemia cells. Isoform 2 may possess an antiapoptotic effect and protect cells during normal cell survival through its regulation of caspases. In Homo sapiens (Human), this protein is Ankyrin repeat and KH domain-containing protein 1 (ANKHD1).